The sequence spans 283 residues: Elongation factor Ts (283 aa).

The segment at 80-83 is involved in Mg(2+) ion dislocation from EF-Tu; the sequence is TDFV.

It belongs to the EF-Ts family.

It is found in the cytoplasm. Its function is as follows. Associates with the EF-Tu.GDP complex and induces the exchange of GDP to GTP. It remains bound to the aminoacyl-tRNA.EF-Tu.GTP complex up to the GTP hydrolysis stage on the ribosome. The chain is Elongation factor Ts from Salmonella agona (strain SL483).